Here is a 108-residue protein sequence, read N- to C-terminus: uncharacterized protein (108 aa).

Over residues 1–14 the composition is skewed to polar residues; it reads MSDSNSRLVYSTET. A disordered region spans residues 1–31; that stretch reads MSDSNSRLVYSTETGRIDEPKAAPVRPKGDG. Residues 15 to 31 are compositionally biased toward basic and acidic residues; sequence GRIDEPKAAPVRPKGDG.

This sequence belongs to the SUI1 family.

This is an uncharacterized protein from Escherichia coli (strain K12).